Consider the following 206-residue polypeptide: Outer-membrane lipoprotein carrier protein (206 aa).

The signal sequence occupies residues M1–A21.

The protein belongs to the LolA family. As to quaternary structure, monomer.

The protein resides in the periplasm. Functionally, participates in the translocation of lipoproteins from the inner membrane to the outer membrane. Only forms a complex with a lipoprotein if the residue after the N-terminal Cys is not an aspartate (The Asp acts as a targeting signal to indicate that the lipoprotein should stay in the inner membrane). The polypeptide is Outer-membrane lipoprotein carrier protein (Shewanella sp. (strain ANA-3)).